Here is a 505-residue protein sequence, read N- to C-terminus: ATP synthase subunit beta (505 aa).

157-164 (GGAGVGKT) contributes to the ATP binding site.

It belongs to the ATPase alpha/beta chains family. In terms of assembly, F-type ATPases have 2 components, CF(1) - the catalytic core - and CF(0) - the membrane proton channel. CF(1) has five subunits: alpha(3), beta(3), gamma(1), delta(1), epsilon(1). CF(0) has three main subunits: a(1), b(2) and c(9-12). The alpha and beta chains form an alternating ring which encloses part of the gamma chain. CF(1) is attached to CF(0) by a central stalk formed by the gamma and epsilon chains, while a peripheral stalk is formed by the delta and b chains.

It is found in the cell inner membrane. The enzyme catalyses ATP + H2O + 4 H(+)(in) = ADP + phosphate + 5 H(+)(out). In terms of biological role, produces ATP from ADP in the presence of a proton gradient across the membrane. The catalytic sites are hosted primarily by the beta subunits. The sequence is that of ATP synthase subunit beta from Bacteroides fragilis (strain ATCC 25285 / DSM 2151 / CCUG 4856 / JCM 11019 / LMG 10263 / NCTC 9343 / Onslow / VPI 2553 / EN-2).